Reading from the N-terminus, the 834-residue chain is MARGERRRRAAAAEGARPLERARAAGRRDGRAGGARGSASGAALAVVVLALAFGLSGRWVLAWLRVRRALTLHPAPSALPPDSSSPAVAPELFWGTYRPHVYFGMKTRSPKPLLTGLMWAQQGATPGTPPKLRHTCEQGDGVGPYGWEFHDGRTFGRQHIHDGALRLTTEFVKRPGGQHGGDWSWRVTVEPQASGTPSFPLVSLFFYVVTDGQEVLLPEIGAKGQLKSISGHTSELGDFRLTLLPPTSPGDTVPKHGSYNVFWSSNPGLPQLTDMVKSRLNSWFQHRPPGASPDRYLGLPGSLKWEERGPSGQGQFLIQQVTLKAPFSVEFVFESGSAATGGNQASGRLVGSQLTQALESHAAAFKERFEKTFQLKEKGLSPEEQALGQVALSGLLGGIGYFYGQGLVLPDTSMEGSEQKMDPALFPPVPLFSGVPSRSFFPRGFLWDEGFHQLVVQRWDPHLTREALGHWLGLLNADGWIGREQILGDEARARVPPEFLVQRAAHANPPTLLLPVVHMLEGHDPDDLAFLRKAFPRLHAWFSWLHQSQAGPVPLSYRWRGRDLALPTLLNPKTLPSGLDDYPRASHPSTAERHLDLRCWVALGARVLSQLAEQLGETEAAAELGPLAASLEEPGSLDELHWAPELGVFADFGNHTKAVQLKSRPPQGLVRVVGRPPPRLQYVDALGYVSLFPLLLQLLDPSSPRLGPLLDVLADSRHLWSPFGLRSLSASSLFYKQRNTEHDPPYWRGAVWLNINYLALGALHHYGHVEGPHKVQAAKLYHELRANVVRNVRQQYQATGFLWEQYSDQDGRGMGCRPFQGWTSLVLLIMAEEY.

The segment covering 1–10 (MARGERRRRA) has biased composition (basic residues). Positions 1–37 (MARGERRRRAAAAEGARPLERARAAGRRDGRAGGARG) are disordered. Topologically, residues 1–43 (MARGERRRRAAAAEGARPLERARAAGRRDGRAGGARGSASGAA) are cytoplasmic. Positions 3-9 (RGERRRR) match the Endoplasmic reticulum targeting motif. The span at 17–31 (RPLERARAAGRRDGR) shows a compositional bias: basic and acidic residues. Residues 44–64 (LAVVVLALAFGLSGRWVLAWL) traverse the membrane as a helical; Signal-anchor for type II membrane protein segment. The Lumenal portion of the chain corresponds to 65-834 (RVRRALTLHP…LVLLIMAEEY (770 aa)). The required for endoplasmic reticulum targeting stretch occupies residues 74–136 (PAPSALPPDS…GTPPKLRHTC (63 aa)). Catalysis depends on Asp580, which acts as the Proton donor. Asn654 is a glycosylation site (N-linked (GlcNAc...) asparagine). The Proton acceptor role is filled by Glu804.

This sequence belongs to the glycosyl hydrolase 63 family.

It localises to the endoplasmic reticulum membrane. The enzyme catalyses N(4)-(alpha-D-Glc-(1-&gt;2)-alpha-D-Glc-(1-&gt;3)-alpha-D-Glc-(1-&gt;3)-alpha-D-Man-(1-&gt;2)-alpha-D-Man-(1-&gt;2)-alpha-D-Man-(1-&gt;3)-[alpha-D-Man-(1-&gt;2)-alpha-D-Man-(1-&gt;3)-[alpha-D-Man-(1-&gt;2)-alpha-D-Man-(1-&gt;6)]-alpha-D-Man-(1-&gt;6)]-beta-D-Man-(1-&gt;4)-beta-D-GlcNAc-(1-&gt;4)-beta-D-GlcNAc)-L-asparaginyl-[protein] + H2O = N(4)-(alpha-D-Glc-(1-&gt;3)-alpha-D-Glc-(1-&gt;3)-alpha-D-Man-(1-&gt;2)-alpha-D-Man-(1-&gt;2)-alpha-D-Man-(1-&gt;3)-[alpha-D-Man-(1-&gt;2)-alpha-D-Man-(1-&gt;3)-[alpha-D-Man-(1-&gt;2)-alpha-D-Man-(1-&gt;6)]-alpha-D-Man-(1-&gt;6)]-beta-D-Man-(1-&gt;4)-beta-D-GlcNAc-(1-&gt;4)-beta-D-GlcNAc)-L-asparaginyl-[protein] + beta-D-glucose. It functions in the pathway glycan metabolism; N-glycan degradation. With respect to regulation, inhibited by the deoxynojirimycin derivative N-9'-Methoxynonyl-1-Deoxynojirimycin. In terms of biological role, in the context of N-glycan degradation, cleaves the distal alpha 1,2-linked glucose residue from the Glc(3)Man(9)GlcNAc(2) oligosaccharide precursor in a highly specific manner. Its function is as follows. (Microbial infection) Required for successful influenza or dengue virus infection; inhibition of its activity by a deoxynojirimycin derivative prevents death in mice infected with lethal doses of influenza or dengue viruses, even when administrated after infection. The protein is Mannosyl-oligosaccharide glucosidase of Mus musculus (Mouse).